Here is a 160-residue protein sequence, read N- to C-terminus: Transcription elongation factor GreA (160 aa).

Positions 2–81 (AEKKNILTYE…KNAEVVVEDE (80 aa)) form a coiled coil. The segment at 36 to 55 (KEAREQGDLSENAEYDAAKD) is disordered.

It belongs to the GreA/GreB family.

Its function is as follows. Necessary for efficient RNA polymerase transcription elongation past template-encoded arresting sites. The arresting sites in DNA have the property of trapping a certain fraction of elongating RNA polymerases that pass through, resulting in locked ternary complexes. Cleavage of the nascent transcript by cleavage factors such as GreA or GreB allows the resumption of elongation from the new 3'terminus. GreA releases sequences of 2 to 3 nucleotides. The chain is Transcription elongation factor GreA from Lachnoclostridium phytofermentans (strain ATCC 700394 / DSM 18823 / ISDg) (Clostridium phytofermentans).